Here is a 289-residue protein sequence, read N- to C-terminus: Protoheme IX farnesyltransferase (289 aa).

A run of 9 helical transmembrane segments spans residues 9 to 29, 35 to 55, 89 to 109, 110 to 130, 138 to 158, 164 to 184, 188 to 208, 228 to 248, and 269 to 289; these read VALMKLRVVELLLITTVPVMM, MPSLWLIAVTLVAGTLAAGSA, LTFGIVIGIVSTLMFGLLVNW, PSALLADGAIAFYVFVYTLGL, IVIGGAAGCFPVLIGWSAVTG, AVLLFAVVFFWTPPHFWALAM, DDYAAAGIPMLPVVAPVEVVT, VAHTGPVYLVSAVVVGAWFLA, and FHMSITYLTLLFVAIAVTAVV.

The protein belongs to the UbiA prenyltransferase family. Protoheme IX farnesyltransferase subfamily.

It is found in the cell membrane. It carries out the reaction heme b + (2E,6E)-farnesyl diphosphate + H2O = Fe(II)-heme o + diphosphate. It participates in porphyrin-containing compound metabolism; heme O biosynthesis; heme O from protoheme: step 1/1. Its function is as follows. Converts heme B (protoheme IX) to heme O by substitution of the vinyl group on carbon 2 of heme B porphyrin ring with a hydroxyethyl farnesyl side group. The chain is Protoheme IX farnesyltransferase from Frankia alni (strain DSM 45986 / CECT 9034 / ACN14a).